We begin with the raw amino-acid sequence, 149 residues long: L-alanine exporter AlaE (149 aa).

4 consecutive transmembrane segments (helical) span residues 16–36 (FAMVVYCSVVNMCIEVFLSGM), 46–66 (LVAIPVNILIAWPYGMYRDLF), 85–105 (ILAYVTFQSPVYVAILLVVGA), and 112–132 (AAVSSNIVVSMLMGAVYGYFL).

The protein belongs to the AlaE exporter family.

It is found in the cell inner membrane. Functionally, exports L-alanine. This Shigella flexneri protein is L-alanine exporter AlaE.